Here is a 362-residue protein sequence, read N- to C-terminus: Nuclear hormone receptor family member nhr-77 (362 aa).

Residues 8–82 (DPICPVCEFP…AGMKRNLVKQ (75 aa)) constitute a DNA-binding region (nuclear receptor). 2 consecutive NR C4-type zinc fingers follow at residues 11 to 32 (CPVC…CGAC) and 48 to 69 (CEKN…FDYC). The region spanning 145–362 (EAEKDVSKIL…KLYIQLGLPF (218 aa)) is the NR LBD domain.

The protein belongs to the nuclear hormone receptor family.

The protein resides in the nucleus. Functionally, orphan nuclear receptor. In Caenorhabditis elegans, this protein is Nuclear hormone receptor family member nhr-77 (nhr-77).